A 526-amino-acid polypeptide reads, in one-letter code: Meiotically up-regulated gene 99 protein, mitochondrial (526 aa).

2 consecutive transmembrane segments (helical) span residues 398–418 and 421–441; these read TLYT…LYFV and FSLY…LYYL.

It localises to the mitochondrion membrane. In terms of biological role, required for correct meiotic chromosome segregation. Appears to also have role in sporulation. The polypeptide is Meiotically up-regulated gene 99 protein, mitochondrial (mug99) (Schizosaccharomyces pombe (strain 972 / ATCC 24843) (Fission yeast)).